The sequence spans 235 residues: UPF0173 metal-dependent hydrolase mll0680 (235 aa).

It belongs to the UPF0173 family.

In Mesorhizobium japonicum (strain LMG 29417 / CECT 9101 / MAFF 303099) (Mesorhizobium loti (strain MAFF 303099)), this protein is UPF0173 metal-dependent hydrolase mll0680.